A 433-amino-acid chain; its full sequence is ACT domain-containing protein ACR6 (433 aa).

4 consecutive ACT domains span residues 30-110 (VIQV…RSSV), 120-207 (SIEL…SCSD), 250-326 (VVTM…ASEG), and 328-402 (ELEL…VKKK).

Its function is as follows. May bind amino acids. This chain is ACT domain-containing protein ACR6, found in Arabidopsis thaliana (Mouse-ear cress).